The primary structure comprises 191 residues: NF-kappa-B inhibitor-interacting Ras-like protein 2 (191 aa).

Positions M1–G191 are small GTPase-like. G11–T18 contributes to the GTP binding site. Positions M35–Y43 match the Effector region motif. GTP-binding positions include D61–L65 and N120–D123. A disordered region spans residues T169–G191.

This sequence belongs to the small GTPase superfamily. Ras family. KappaB-Ras subfamily. Interacts with both NF-kappa-B inhibitor alpha (NFKBIA) and beta (NFKBIB) in vitro. However, it probably only interacts with NFKBIB in vivo. Interacts with GFOD1. In terms of tissue distribution, widely expressed.

It localises to the cytoplasm. Atypical Ras-like protein that acts as a potent regulator of NF-kappa-B activity by preventing the degradation of NF-kappa-B inhibitor beta (NFKBIB) by most signals, explaining why NFKBIB is more resistant to degradation. May act by blocking phosphorylation of NFKBIB and nuclear localization of p65/RELA NF-kappa-B subunit. It is unclear whether it acts as a GTPase. Both GTP- and GDP-bound forms block phosphorylation of NFKBIB. This is NF-kappa-B inhibitor-interacting Ras-like protein 2 (NKIRAS2) from Homo sapiens (Human).